A 307-amino-acid polypeptide reads, in one-letter code: Probable rRNA-processing protein EBP2 homolog (307 aa).

3 disordered regions span residues 1-22 (MSDF…SDAE), 189-208 (QRKM…EAEK), and 236-307 (ESKQ…KGRK). Residues 205–252 (EAEKKDMLDKLKKFRKGKLKNLDFLEDAKALESKQKQSAENRKKRNKK) are a coiled coil. Positions 236–245 (ESKQKQSAEN) are enriched in basic and acidic residues. Basic residues-rich tracts occupy residues 246–266 (RKKR…KRNT) and 294–307 (RLGK…KGRK).

It belongs to the EBP2 family.

The protein localises to the nucleus. The protein resides in the nucleolus. Functionally, required for the processing of the 27S pre-rRNA. The polypeptide is Probable rRNA-processing protein EBP2 homolog (Drosophila melanogaster (Fruit fly)).